A 205-amino-acid chain; its full sequence is HTH-type transcriptional regulator LuxR (205 aa).

One can recognise an HTH tetR-type domain in the interval 15 to 75 (LKRKQQLMEI…EVLNHVVRQF (61 aa)). Residues 39–58 (HADIAEIAQVSVATVFNYFP) constitute a DNA-binding region (H-T-H motif).

Functionally, regulatory protein of bacterial bioluminescence. It probably binds the autoinducer molecule and potentiates the transcription of the bioluminescence operon. This Vibrio harveyi (Beneckea harveyi) protein is HTH-type transcriptional regulator LuxR (luxR).